A 291-amino-acid polypeptide reads, in one-letter code: Meteorin (291 aa).

Positions 1-21 (MLVATLLCALCCGLLAASAHA) are cleaved as a signal peptide. Cystine bridges form between cysteine 28-cysteine 49, cysteine 80-cysteine 116, cysteine 169-cysteine 240, cysteine 172-cysteine 264, and cysteine 182-cysteine 286.

This sequence belongs to the meteorin family. In terms of assembly, monomer. Highly expressed in brain. Expressed in undifferentiated neural progenitors and in astrocyte lineage, particularly in Bergmann glia, a subtype of radial glia, and a few discrete neuronal populations residing in the superior colliculus, the ocular motor nucleus, the raphe and pontine nuclei, and in various thalamic nuclei. Weakly expressed in heart, kidney, skeletal muscle, spleen, testis, gut and lung.

The protein resides in the secreted. In terms of biological role, involved in both glial cell differentiation and axonal network formation during neurogenesis. Promotes astrocyte differentiation and transforms cerebellar astrocytes into radial glia. Also induces axonal extension in small and intermediate neurons of sensory ganglia by activating nearby satellite glia. This Mus musculus (Mouse) protein is Meteorin (Metrn).